A 937-amino-acid polypeptide reads, in one-letter code: Periplasmic nitrate reductase (937 aa).

The segment at residues 1–42 (MTSKIQGKKPTLSRRDFIKSAAAASAAASVGLSIPSVMSAEA) is a signal peptide (tat-type signal). The 4Fe-4S Mo/W bis-MGD-type domain maps to 49 to 110 (WKWDKSVCRF…FCAKIMYGAD (62 aa)). Residues C56, C59, C63, and C96 each contribute to the [4Fe-4S] cluster site. Mo-bis(molybdopterin guanine dinucleotide)-binding positions include K98, Q166, N191, C195, 228-235 (WGANMAEM), M433, Q437, N543, 568-569 (SE), K591, D618, and 827-836 (TGRVLEHWHS). W903 contributes to the substrate binding site. Mo-bis(molybdopterin guanine dinucleotide) is bound by residues N911 and K928.

Belongs to the prokaryotic molybdopterin-containing oxidoreductase family. NasA/NapA/NarB subfamily. In terms of assembly, component of the periplasmic nitrate reductase NapAB complex composed of NapA and NapB. [4Fe-4S] cluster is required as a cofactor. Requires Mo-bis(molybdopterin guanine dinucleotide) as cofactor. Predicted to be exported by the Tat system. The position of the signal peptide cleavage has not been experimentally proven.

It is found in the periplasm. It catalyses the reaction 2 Fe(II)-[cytochrome] + nitrate + 2 H(+) = 2 Fe(III)-[cytochrome] + nitrite + H2O. In terms of biological role, catalytic subunit of the periplasmic nitrate reductase complex NapAB. Receives electrons from NapB and catalyzes the reduction of nitrate to nitrite. In Helicobacter hepaticus (strain ATCC 51449 / 3B1), this protein is Periplasmic nitrate reductase.